The sequence spans 245 residues: Biosynthetic peptidoglycan transglycosylase (245 aa).

A helical transmembrane segment spans residues 29–49; the sequence is LLVAFLILSLVLVATVSVINP.

This sequence belongs to the glycosyltransferase 51 family.

It localises to the cell inner membrane. The catalysed reaction is [GlcNAc-(1-&gt;4)-Mur2Ac(oyl-L-Ala-gamma-D-Glu-L-Lys-D-Ala-D-Ala)](n)-di-trans,octa-cis-undecaprenyl diphosphate + beta-D-GlcNAc-(1-&gt;4)-Mur2Ac(oyl-L-Ala-gamma-D-Glu-L-Lys-D-Ala-D-Ala)-di-trans,octa-cis-undecaprenyl diphosphate = [GlcNAc-(1-&gt;4)-Mur2Ac(oyl-L-Ala-gamma-D-Glu-L-Lys-D-Ala-D-Ala)](n+1)-di-trans,octa-cis-undecaprenyl diphosphate + di-trans,octa-cis-undecaprenyl diphosphate + H(+). It participates in cell wall biogenesis; peptidoglycan biosynthesis. Peptidoglycan polymerase that catalyzes glycan chain elongation from lipid-linked precursors. This chain is Biosynthetic peptidoglycan transglycosylase, found in Shewanella amazonensis (strain ATCC BAA-1098 / SB2B).